The chain runs to 316 residues: 4-hydroxy-3-methylbut-2-enyl diphosphate reductase (316 aa).

C12 serves as a coordination point for [4Fe-4S] cluster. Residues H41 and H74 each coordinate (2E)-4-hydroxy-3-methylbut-2-enyl diphosphate. Residues H41 and H74 each coordinate dimethylallyl diphosphate. Isopentenyl diphosphate-binding residues include H41 and H74. A [4Fe-4S] cluster-binding site is contributed by C96. H124 serves as a coordination point for (2E)-4-hydroxy-3-methylbut-2-enyl diphosphate. Dimethylallyl diphosphate is bound at residue H124. Residue H124 participates in isopentenyl diphosphate binding. E126 functions as the Proton donor in the catalytic mechanism. T167 contacts (2E)-4-hydroxy-3-methylbut-2-enyl diphosphate. Position 197 (C197) interacts with [4Fe-4S] cluster. (2E)-4-hydroxy-3-methylbut-2-enyl diphosphate contacts are provided by S225, S226, N227, and S269. The dimethylallyl diphosphate site is built by S225, S226, N227, and S269. Positions 225, 226, 227, and 269 each coordinate isopentenyl diphosphate.

The protein belongs to the IspH family. As to quaternary structure, homodimer. It depends on [4Fe-4S] cluster as a cofactor.

The catalysed reaction is isopentenyl diphosphate + 2 oxidized [2Fe-2S]-[ferredoxin] + H2O = (2E)-4-hydroxy-3-methylbut-2-enyl diphosphate + 2 reduced [2Fe-2S]-[ferredoxin] + 2 H(+). It catalyses the reaction dimethylallyl diphosphate + 2 oxidized [2Fe-2S]-[ferredoxin] + H2O = (2E)-4-hydroxy-3-methylbut-2-enyl diphosphate + 2 reduced [2Fe-2S]-[ferredoxin] + 2 H(+). It functions in the pathway isoprenoid biosynthesis; dimethylallyl diphosphate biosynthesis; dimethylallyl diphosphate from (2E)-4-hydroxy-3-methylbutenyl diphosphate: step 1/1. Its pathway is isoprenoid biosynthesis; isopentenyl diphosphate biosynthesis via DXP pathway; isopentenyl diphosphate from 1-deoxy-D-xylulose 5-phosphate: step 6/6. Its function is as follows. Catalyzes the conversion of 1-hydroxy-2-methyl-2-(E)-butenyl 4-diphosphate (HMBPP) into a mixture of isopentenyl diphosphate (IPP) and dimethylallyl diphosphate (DMAPP). Acts in the terminal step of the DOXP/MEP pathway for isoprenoid precursor biosynthesis. In Cronobacter sakazakii (strain ATCC BAA-894) (Enterobacter sakazakii), this protein is 4-hydroxy-3-methylbut-2-enyl diphosphate reductase.